Here is a 102-residue protein sequence, read N- to C-terminus: Urease subunit beta (102 aa).

It belongs to the urease beta subunit family. In terms of assembly, heterotrimer of UreA (gamma), UreB (beta) and UreC (alpha) subunits. Three heterotrimers associate to form the active enzyme.

Its subcellular location is the cytoplasm. The catalysed reaction is urea + 2 H2O + H(+) = hydrogencarbonate + 2 NH4(+). The protein operates within nitrogen metabolism; urea degradation; CO(2) and NH(3) from urea (urease route): step 1/1. The sequence is that of Urease subunit beta from Bordetella pertussis (strain Tohama I / ATCC BAA-589 / NCTC 13251).